A 228-amino-acid chain; its full sequence is 7-cyano-7-deazaguanine synthase (228 aa).

7-17 (LSGGMDSLVTT) is an ATP binding site. Zn(2+) contacts are provided by cysteine 187, cysteine 195, cysteine 198, and cysteine 201.

The protein belongs to the QueC family. Zn(2+) is required as a cofactor.

It carries out the reaction 7-carboxy-7-deazaguanine + NH4(+) + ATP = 7-cyano-7-deazaguanine + ADP + phosphate + H2O + H(+). It functions in the pathway purine metabolism; 7-cyano-7-deazaguanine biosynthesis. In terms of biological role, catalyzes the ATP-dependent conversion of 7-carboxy-7-deazaguanine (CDG) to 7-cyano-7-deazaguanine (preQ(0)). This chain is 7-cyano-7-deazaguanine synthase, found in Chlorobium chlorochromatii (strain CaD3).